The chain runs to 103 residues: Eukaryotic translation initiation factor 4E-1A-binding protein homolog (103 aa).

A disordered region spans residues 49–103; sequence NSPLSKTPPPQLAHITNTELNKKVEKSTTTPTTTTPPTTTAKPKPTNDDDIFPME. Over residues 76–92 the composition is skewed to low complexity; that stretch reads TTTPTTTTPPTTTAKPK.

Belongs to the eIF4E-binding protein family.

Its function is as follows. Regulates assembly of the eIF4F complex. This chain is Eukaryotic translation initiation factor 4E-1A-binding protein homolog (febA), found in Dictyostelium discoideum (Social amoeba).